The sequence spans 272 residues: Shikimate dehydrogenase (NADP(+)) (272 aa).

Residues 14-16 (SKS) and Thr61 contribute to the shikimate site. Lys65 serves as the catalytic Proton acceptor. Residue Glu77 participates in NADP(+) binding. Residues Asn86 and Asp102 each contribute to the shikimate site. Residues 126 to 130 (GAGGA), 149 to 154 (NRTVSR), and Met213 each bind NADP(+). Tyr215 contacts shikimate. Gly237 is a binding site for NADP(+).

It belongs to the shikimate dehydrogenase family. As to quaternary structure, homodimer.

It carries out the reaction shikimate + NADP(+) = 3-dehydroshikimate + NADPH + H(+). Its pathway is metabolic intermediate biosynthesis; chorismate biosynthesis; chorismate from D-erythrose 4-phosphate and phosphoenolpyruvate: step 4/7. Involved in the biosynthesis of the chorismate, which leads to the biosynthesis of aromatic amino acids. Catalyzes the reversible NADPH linked reduction of 3-dehydroshikimate (DHSA) to yield shikimate (SA). The chain is Shikimate dehydrogenase (NADP(+)) from Escherichia coli O157:H7.